We begin with the raw amino-acid sequence, 318 residues long: Transcription factor MYBS3 (318 aa).

2 disordered regions span residues 1-20 (MTRR…TCPN) and 50-98 (AAGS…PWTE). The CCHC-type zinc finger occupies 3–20 (RRCSHCSHNGHNSRTCPN). The span at 8–18 (CSHNGHNSRTC) shows a compositional bias: polar residues. Residues 50–77 (AAGSTSGGASPADGPDAAPTAADGYASD) are compositionally biased toward low complexity. The HTH myb-type domain occupies 88 to 144 (RDRKKGVPWTEEEHRRFLLGLQKLGKGDWRGISRNFVVSRTPTQVASHAQKYFIRQS). The H-T-H motif DNA-binding region spans 116–140 (WRGISRNFVVSRTPTQVASHAQKYF). The interval 159–200 (VPDESMDLPPLPGGQEPETQVLNQPALPPPREEEEVDSMESD) is disordered.

Expressed in all tissues, with the highest level in senescent leaves.

The protein localises to the nucleus. In terms of biological role, transcription repressor that binds to 5'-TATCCA-3' elements in gene promoters. Contributes to the sugar-repressed transcription of promoters containing SRS or 5'-TATCCA-3' elements. Transcription repressor involved in a cold stress response pathway that confers cold tolerance. Suppresses the DREB1-dependent signaling pathway under prolonged cold stress. DREB1 responds quickly and transiently while MYBS3 responds slowly to cold stress. They may act sequentially and complementarily for adaptation to short- and long-term cold stress. In Oryza sativa subsp. japonica (Rice), this protein is Transcription factor MYBS3.